The primary structure comprises 251 residues: uncharacterized protein (251 aa).

This is an uncharacterized protein from Acanthamoeba polyphaga mimivirus (APMV).